Reading from the N-terminus, the 420-residue chain is Mannose-1-phosphate guanylyltransferase regulatory subunit alpha (420 aa).

The tract at residues 2 to 251 (LKAVILIGGP…DGIWSQIKSA (250 aa)) is substrate-binding domain. Residues Glu85 and Gln247 each coordinate GDP-alpha-D-mannose. Positions 273–420 (LAKHTPGGPR…SRSFTNQIIL (148 aa)) are hexapeptide repeat domain. A C-loop region spans residues 356–384 (TPNDPNPNDPRARMDSESLFKDGKLLPAI).

This sequence belongs to the transferase hexapeptide repeat family. In terms of assembly, component of the GMPPA-GMPPB mannose-1-phosphate guanylyltransferase complex composed of 4 GMPPA subunits and 8 GMPPB subunits; the complex is organized into three layers, a central layer made up of 2 GMPPA dimers sandwiched between two layers each made up of 2 GMPPB dimers.

The protein resides in the cytoplasm. Regulatory subunit of the GMPPA-GMPPB mannose-1-phosphate guanylyltransferase complex; reduces the catalytic activity of GMPPB when part of the complex. Mediates allosteric feedback inhibition of GMPPB catalytic activity upon binding GDP-alpha-D-mannose. Together with GMPPB regulates GDP-alpha-D-mannose levels. The protein is Mannose-1-phosphate guanylyltransferase regulatory subunit alpha (GMPPA) of Papio anubis (Olive baboon).